The primary structure comprises 590 residues: Leucine-rich repeat transmembrane neuronal protein 4 (590 aa).

Positions 1 to 30 are cleaved as a signal peptide; that stretch reads MGFHLITQLKGMSVVLVLLPTLLLVMLTGA. The region spanning 31 to 61 is the LRRNT domain; the sequence is QRACPKNCRCDGKIVYCESHAFADIPENISG. The Extracellular portion of the chain corresponds to 31–424; that stretch reads QRACPKNCRC…QEYEHVSFHK (394 aa). Residue asparagine 58 is glycosylated (N-linked (GlcNAc...) asparagine). 10 LRR repeats span residues 62-83, 86-107, 110-131, 134-155, 158-179, 182-203, 206-226, 230-251, 254-275, and 278-299; these read GSQG…QFAG, QLIW…AFQG, RLKE…TFHP, NLRN…QFKG, KLII…VFQD, NLDF…AFAG, KLKE…AHFP, NLRS…LTWT, SLHN…TFKC, and NLQK…TVNA. Asparagine 126 carries an N-linked (GlcNAc...) asparagine glycan. Asparagine 291 carries an N-linked (GlcNAc...) asparagine glycan. Residues 311 to 362 form the LRRCT domain; it reads NMWECSRSICPLFYWLKNFKGNKESTMICAGPKHIQGEKVSDAVETYNICSE. A helical transmembrane segment spans residues 425–445; the sequence is IIAGSVALFLSVAMILLVIYV. The Cytoplasmic segment spans residues 446–590; that stretch reads SWKRYPASMK…PAIYLERIAN (145 aa).

It belongs to the LRRTM family. As to quaternary structure, peripherally associated with AMPAR complex. AMPAR complex consists of an inner core made of 4 pore-forming GluA/GRIA proteins (GRIA1, GRIA2, GRIA3 and GRIA4) and 4 major auxiliary subunits arranged in a twofold symmetry. One of the two pairs of distinct binding sites is occupied either by CNIH2, CNIH3 or CACNG2, CACNG3. The other harbors CACNG2, CACNG3, CACNG4, CACNG8 or GSG1L. This inner core of AMPAR complex is complemented by outer core constituents binding directly to the GluA/GRIA proteins at sites distinct from the interaction sites of the inner core constituents. Outer core constituents include at least PRRT1, PRRT2, CKAMP44/SHISA9, FRRS1L and NRN1. The proteins of the inner and outer core serve as a platform for other, more peripherally associated AMPAR constituents, including LRRTM4. Alone or in combination, these auxiliary subunits control the gating and pharmacology of the AMPAR complex and profoundly impact their biogenesis and protein processing. In terms of tissue distribution, expressed in neuronal tissues.

It localises to the cell membrane. Its subcellular location is the postsynaptic cell membrane. Its function is as follows. May play a role in the development and maintenance of the vertebrate nervous system. Exhibits strong synaptogenic activity, restricted to excitatory presynaptic differentiation. This chain is Leucine-rich repeat transmembrane neuronal protein 4 (LRRTM4), found in Homo sapiens (Human).